The primary structure comprises 140 residues: Large ribosomal subunit protein uL13 (140 aa).

This sequence belongs to the universal ribosomal protein uL13 family. As to quaternary structure, part of the 50S ribosomal subunit.

Its function is as follows. This protein is one of the early assembly proteins of the 50S ribosomal subunit, although it is not seen to bind rRNA by itself. It is important during the early stages of 50S assembly. This chain is Large ribosomal subunit protein uL13, found in Sulfurimonas denitrificans (strain ATCC 33889 / DSM 1251) (Thiomicrospira denitrificans (strain ATCC 33889 / DSM 1251)).